The chain runs to 250 residues: Glycerol uptake facilitator protein-like 5 (250 aa).

Helical transmembrane passes span 12–32 (EFFG…NAFL) and 46–66 (GGWL…AMMF). The NPA 1 signature appears at 75–77 (NPA). Helical transmembrane passes span 85 to 105 (IGIF…LGAI), 142 to 162 (LNGF…AMGL), and 172 to 192 (IDIA…SLGG). Positions 199–201 (NPA) match the NPA 2 motif. A helical transmembrane segment spans residues 230–250 (VVAPIVGAVIGIWIYKIFFGL).

This sequence belongs to the MIP/aquaporin (TC 1.A.8) family.

The protein resides in the cell membrane. Its function is as follows. Probable transporter that facilitates the transmembrane diffusion of an unknown substrate. Is not permeable to water, dihydroxyacetone, glycerol, urea, H(2)O(2) and D/L-lactic acid. The sequence is that of Glycerol uptake facilitator protein-like 5 from Lactiplantibacillus plantarum (strain ATCC BAA-793 / NCIMB 8826 / WCFS1) (Lactobacillus plantarum).